A 243-amino-acid polypeptide reads, in one-letter code: 3-deoxy-manno-octulosonate cytidylyltransferase (243 aa).

The protein belongs to the KdsB family.

It is found in the cytoplasm. It carries out the reaction 3-deoxy-alpha-D-manno-oct-2-ulosonate + CTP = CMP-3-deoxy-beta-D-manno-octulosonate + diphosphate. It functions in the pathway nucleotide-sugar biosynthesis; CMP-3-deoxy-D-manno-octulosonate biosynthesis; CMP-3-deoxy-D-manno-octulosonate from 3-deoxy-D-manno-octulosonate and CTP: step 1/1. The protein operates within bacterial outer membrane biogenesis; lipopolysaccharide biosynthesis. Activates KDO (a required 8-carbon sugar) for incorporation into bacterial lipopolysaccharide in Gram-negative bacteria. The chain is 3-deoxy-manno-octulosonate cytidylyltransferase from Helicobacter pylori (strain G27).